We begin with the raw amino-acid sequence, 500 residues long: Ferulic acid decarboxylase 1 (500 aa).

Mn(2+) is bound by residues Asn168, His191, and Glu233. Residues 168–173 (NWSIAR), 190–191 (QH), and Glu233 contribute to the prenylated FMN site. The active-site Proton donor is the Glu282. Lys391 serves as a coordination point for prenylated FMN.

The protein belongs to the UbiD family. UbiD-like/FDC subfamily. As to quaternary structure, homodimer. May form higher order oligomers. Mn(2+) serves as cofactor. Prenylated FMN is required as a cofactor.

It is found in the cytoplasm. It carries out the reaction (E)-4-coumarate + H(+) = 4-vinylphenol + CO2. The enzyme catalyses (E)-cinnamate + H(+) = styrene + CO2. It catalyses the reaction (E)-ferulate + H(+) = 2-methoxy-4-vinylphenol + CO2. In terms of biological role, catalyzes the reversible decarboxylation of aromatic carboxylic acids like ferulic acid, p-coumaric acid or cinnamic acid, producing the corresponding vinyl derivatives 4-vinylphenol, 4-vinylguaiacol, and styrene, respectively, which play the role of aroma metabolites. This chain is Ferulic acid decarboxylase 1, found in Aspergillus niger (strain ATCC MYA-4892 / CBS 513.88 / FGSC A1513).